A 300-amino-acid chain; its full sequence is Ribosomal protein L11 methyltransferase (300 aa).

Residues Thr152, Gly173, Asp195, and Asn234 each coordinate S-adenosyl-L-methionine.

This sequence belongs to the methyltransferase superfamily. PrmA family.

The protein localises to the cytoplasm. The catalysed reaction is L-lysyl-[protein] + 3 S-adenosyl-L-methionine = N(6),N(6),N(6)-trimethyl-L-lysyl-[protein] + 3 S-adenosyl-L-homocysteine + 3 H(+). Functionally, methylates ribosomal protein L11. In Burkholderia mallei (strain NCTC 10247), this protein is Ribosomal protein L11 methyltransferase.